The chain runs to 353 residues: tRNA N6-adenosine threonylcarbamoyltransferase (353 aa).

2 residues coordinate Fe cation: His-111 and His-115. Substrate contacts are provided by residues 148–152 (LVSGG), Asp-181, Gly-194, and Asn-286. Residue Asp-314 coordinates Fe cation.

It belongs to the KAE1 / TsaD family. Requires Fe(2+) as cofactor.

It localises to the cytoplasm. The catalysed reaction is L-threonylcarbamoyladenylate + adenosine(37) in tRNA = N(6)-L-threonylcarbamoyladenosine(37) in tRNA + AMP + H(+). Functionally, required for the formation of a threonylcarbamoyl group on adenosine at position 37 (t(6)A37) in tRNAs that read codons beginning with adenine. Is involved in the transfer of the threonylcarbamoyl moiety of threonylcarbamoyl-AMP (TC-AMP) to the N6 group of A37, together with TsaE and TsaB. TsaD likely plays a direct catalytic role in this reaction. This Blochmanniella floridana protein is tRNA N6-adenosine threonylcarbamoyltransferase.